Consider the following 373-residue polypeptide: MEGLESVYAQAMYGMTRESKIMEHQGSDLIWGGNELMARELCSSSSYHHQLINPNLSSCFMSDLGVLGEIQQQQHVGNRASSIDPSSLDCLLSATSNSNNTSTEDDEGISVLFSDCQTLWSFGGVSSAESENREITTETTTTIKPKPLKRNRGGDGGTTETTTTTTKPKSLKRNRGDETGSHFSLVHPQDDSEKGGFKLIYDENQSKSKKPRTEKERGGSSNISFQHSTCLSDNVEPDAEAIAQMKEMIYRAAAFRPVNFGLEIVEKPKRKNVKISTDPQTVAARQRRERISEKIRVLQTLVPGGTKMDTASMLDEAANYLKFLRAQVKALENLRPKLDQTNLSFSSAPTSFPLFHPSFLPLQNPNQIHHPEC.

Residues 127–227 (SAESENREIT…GGSSNISFQH (101 aa)) form a disordered region. The span at 188 to 218 (PQDDSEKGGFKLIYDENQSKSKKPRTEKERG) shows a compositional bias: basic and acidic residues. The bHLH domain occupies 275–324 (ISTDPQTVAARQRRERISEKIRVLQTLVPGGTKMDTASMLDEAANYLKFL).

As to quaternary structure, homodimer. As to expression, flowers.

The protein resides in the nucleus. This is Transcription factor bHLH87 (BHLH87) from Arabidopsis thaliana (Mouse-ear cress).